A 129-amino-acid polypeptide reads, in one-letter code: Small ribosomal subunit protein eS6 (129 aa).

A disordered region spans residues 53–88 (TGGSDTSGRPMRPDVRGVTTKEIMSDGGVGFEPTTD).

It belongs to the eukaryotic ribosomal protein eS6 family.

The chain is Small ribosomal subunit protein eS6 (rps6e) from Haloarcula marismortui (strain ATCC 43049 / DSM 3752 / JCM 8966 / VKM B-1809) (Halobacterium marismortui).